Here is a 598-residue protein sequence, read N- to C-terminus: Aspartate--tRNA ligase (598 aa).

An L-aspartate-binding site is contributed by Glu-175. The tract at residues 199 to 202 is aspartate; it reads QLFK. Arg-221 provides a ligand contact to L-aspartate. ATP contacts are provided by residues 221 to 223 and Gln-230; that span reads RDE. His-450 lines the L-aspartate pocket. Glu-486 serves as a coordination point for ATP. Position 493 (Arg-493) interacts with L-aspartate. 538–541 contributes to the ATP binding site; sequence GLDR.

Belongs to the class-II aminoacyl-tRNA synthetase family. Type 1 subfamily. In terms of assembly, homodimer.

Its subcellular location is the cytoplasm. It catalyses the reaction tRNA(Asp) + L-aspartate + ATP = L-aspartyl-tRNA(Asp) + AMP + diphosphate. Catalyzes the attachment of L-aspartate to tRNA(Asp) in a two-step reaction: L-aspartate is first activated by ATP to form Asp-AMP and then transferred to the acceptor end of tRNA(Asp). The polypeptide is Aspartate--tRNA ligase (Lactiplantibacillus plantarum (strain ATCC BAA-793 / NCIMB 8826 / WCFS1) (Lactobacillus plantarum)).